Here is a 458-residue protein sequence, read N- to C-terminus: Chromosomal replication initiator protein DnaA (458 aa).

The interval 1–79 (MSLAIWQECL…ENPNHSVKIR (79 aa)) is domain I, interacts with DnaA modulators. The domain II stretch occupies residues 79–120 (RLMVGNVSSVEKKPAKQIPTQAPLTNQPWEGESKAHRVPHKS). The tract at residues 92–114 (PAKQIPTQAPLTNQPWEGESKAH) is disordered. Polar residues predominate over residues 96-106 (IPTQAPLTNQP). A domain III, AAA+ region region spans residues 121-338 (NLIKKYTFDN…GAIANISAKA (218 aa)). ATP-binding residues include glycine 165, glycine 167, lysine 168, and threonine 169. The segment at 339-458 (QFTGQGITIS…YKILIRTLSM (120 aa)) is domain IV, binds dsDNA.

This sequence belongs to the DnaA family. Oligomerizes as a right-handed, spiral filament on DNA at oriC.

The protein localises to the cytoplasm. Functionally, plays an essential role in the initiation and regulation of chromosomal replication. ATP-DnaA binds to the origin of replication (oriC) to initiate formation of the DNA replication initiation complex once per cell cycle. Binds the DnaA box (a 9 base pair repeat at the origin) and separates the double-stranded (ds)DNA. Forms a right-handed helical filament on oriC DNA; dsDNA binds to the exterior of the filament while single-stranded (ss)DNA is stabiized in the filament's interior. The ATP-DnaA-oriC complex binds and stabilizes one strand of the AT-rich DNA unwinding element (DUE), permitting loading of DNA polymerase. After initiation quickly degrades to an ADP-DnaA complex that is not apt for DNA replication. Binds acidic phospholipids. This is Chromosomal replication initiator protein DnaA from Psychromonas ingrahamii (strain DSM 17664 / CCUG 51855 / 37).